Reading from the N-terminus, the 750-residue chain is Photosystem I P700 chlorophyll a apoprotein A1 (750 aa).

A run of 8 helical transmembrane segments spans residues 70–93 (VFSA…FHGA), 156–179 (LYCT…FHYH), 195–219 (LNHH…HVSL), 291–309 (IAHH…GHMY), 346–369 (WHAQ…HHMY), 385–411 (LSLF…IFMV), 433–455 (AIIS…LYIH), and 531–549 (FLVH…LILL). The [4Fe-4S] cluster site is built by Cys573 and Cys582. 2 helical membrane passes run 589 to 610 (HVFL…HFSW) and 664 to 686 (LSAY…MFLF). Residue His675 participates in chlorophyll a' binding. Met683 and Tyr691 together coordinate chlorophyll a. Trp692 provides a ligand contact to phylloquinone. The helical transmembrane segment at 724–744 (AVGVTHYLLGGIATTWAFFLA) threads the bilayer.

It belongs to the PsaA/PsaB family. In terms of assembly, the PsaA/B heterodimer binds the P700 chlorophyll special pair and subsequent electron acceptors. PSI consists of a core antenna complex that captures photons, and an electron transfer chain that converts photonic excitation into a charge separation. The eukaryotic PSI reaction center is composed of at least 11 subunits. It depends on P700 is a chlorophyll a/chlorophyll a' dimer, A0 is one or more chlorophyll a, A1 is one or both phylloquinones and FX is a shared 4Fe-4S iron-sulfur center. as a cofactor.

The protein localises to the plastid. It localises to the chloroplast thylakoid membrane. The enzyme catalyses reduced [plastocyanin] + hnu + oxidized [2Fe-2S]-[ferredoxin] = oxidized [plastocyanin] + reduced [2Fe-2S]-[ferredoxin]. Functionally, psaA and PsaB bind P700, the primary electron donor of photosystem I (PSI), as well as the electron acceptors A0, A1 and FX. PSI is a plastocyanin-ferredoxin oxidoreductase, converting photonic excitation into a charge separation, which transfers an electron from the donor P700 chlorophyll pair to the spectroscopically characterized acceptors A0, A1, FX, FA and FB in turn. Oxidized P700 is reduced on the lumenal side of the thylakoid membrane by plastocyanin. This is Photosystem I P700 chlorophyll a apoprotein A1 from Agrostis stolonifera (Creeping bentgrass).